Consider the following 249-residue polypeptide: uncharacterized protein (249 aa).

Composition is skewed to polar residues over residues 66 to 79 (NASL…TISP) and 92 to 119 (ASGS…SSSE). The tract at residues 66 to 142 (NASLESGQSS…GPTSPRVTPG (77 aa)) is disordered.

The protein resides in the plastid. It localises to the chloroplast. This is an uncharacterized protein from Chlorella vulgaris (Green alga).